Consider the following 607-residue polypeptide: Runt-related transcription factor 2 (607 aa).

Residues 1-88 (MLHSPHKQPQ…TMASNSLFSA (88 aa)) form an interaction with IFI204 region. Over residues 100–112 (PSTSRRFSPPSSS) the composition is skewed to low complexity. Positions 100 to 126 (PSTSRRFSPPSSSLQPGKMSDVSPVVA) are disordered. The region spanning 187 to 315 (TMVEIIADHP…TVDGPREPRR (129 aa)) is the Runt domain. Positions 242 to 258 (VMAGNDENYSAELRNAS) are required for interaction with FOXO1. Residues 307–430 (VDGPREPRRH…VPRRISDDDT (124 aa)) are disordered. A Glycyl lysine isopeptide (Lys-Gly) (interchain with G-Cter in SUMO2) cross-link involves residue Lys-324. An Asymmetric dimethylarginine modification is found at Arg-353. Over residues 353–412 (RPSLNSAPSPFNPQGQSQITDPRQAQSSPPWSYDQSYPSYLSQMTSPSIHSTTPLSSTRG) the composition is skewed to polar residues. Positions 422-525 (PRRISDDDTA…SQSQSGPFQT (104 aa)) are interaction with KAT6A. Residues 460-554 (RQFPSISSLT…VPGGDRSPSR (95 aa)) are interaction with KAT6B. Ser-537 carries the post-translational modification Phosphoserine; by CDK1. The interval 548–607 (GDRSPSRMVPPCTTTSNGSTLLNPNLPNQNDGVDADGSHSSSPTVLNSSGRMDESVWRPY) is disordered. Composition is skewed to polar residues over residues 559–578 (CTTT…NQND) and 585–597 (SHSS…NSSG). The segment covering 598–607 (RMDESVWRPY) has biased composition (basic and acidic residues).

In terms of assembly, heterodimer of an alpha and a beta subunit. The alpha subunit binds DNA as a monomer and through the Runt domain. DNA-binding is increased by heterodimerization. Interacts with XRCC6 (Ku70) and XRCC5 (Ku80). Interacts with CCNB1, KAT6A and KAT6B. Interacts with HIVEP3. Interacts with IFI204. Interaction with SATB2; the interaction results in enhanced DNA binding and transactivation by these transcription factors. Binds to HIPK3. Interacts with FOXO1 (via a C-terminal region); the interaction inhibits RUNX2 transcriptional activity towards BGLAP. Interacts with FOXP3. Interacts with TMEM119. Interacts with OLFM2. Interacts with IPO7; the interaction inhibits RUNX2 nuclear translocation in osteoblasts. Interacts with DDX5. Phosphorylated; probably by MAP kinases (MAPK). Phosphorylation by HIPK3 is required for the SPEN/MINT and FGF2 transactivation during osteoblastic differentiation. Phosphorylation at Ser-537 by CDK1 promotes endothelial cell proliferation required for tumor angiogenesis probably by facilitating cell cycle progression. As to expression, found in thymus and testis, T-cell lines but not in B-cell lines. Isoform 2 is exclusively found in bone, particularly in osteoblasts; isoforms 3 and 4 are expressed in T-cell lines; isoforms 5, 6, 7, 8 and 9 can be found in osteoblasts and osteosarcoma cell lines.

It localises to the nucleus. The protein localises to the cytoplasm. Transcription factor involved in osteoblastic differentiation and skeletal morphogenesis. Essential for the maturation of osteoblasts and both intramembranous and endochondral ossification. CBF binds to the core site, 5'-PYGPYGGT-3', of a number of enhancers and promoters, including murine leukemia virus, polyomavirus enhancer, T-cell receptor enhancers, osteocalcin, osteopontin, bone sialoprotein, alpha 1(I) collagen, LCK, IL-3 and GM-CSF promoters. Inhibits KAT6B-dependent transcriptional activation. In osteoblasts, supports transcription activation: synergizes with SPEN/MINT to enhance FGFR2-mediated activation of the osteocalcin FGF-responsive element (OCFRE). In Mus musculus (Mouse), this protein is Runt-related transcription factor 2 (Runx2).